Consider the following 134-residue polypeptide: Holo-[acyl-carrier-protein] synthase (134 aa).

Residues Asp-8 and Glu-57 each coordinate Mg(2+).

It belongs to the P-Pant transferase superfamily. AcpS family. Mg(2+) serves as cofactor.

It is found in the cytoplasm. It carries out the reaction apo-[ACP] + CoA = holo-[ACP] + adenosine 3',5'-bisphosphate + H(+). Functionally, transfers the 4'-phosphopantetheine moiety from coenzyme A to a Ser of acyl-carrier-protein. The polypeptide is Holo-[acyl-carrier-protein] synthase (Brucella abortus (strain S19)).